Reading from the N-terminus, the 215-residue chain is Large ribosomal subunit protein uL3 (215 aa).

The segment at 136-155 (GVSISHRSHGSTGQRQDPGK) is disordered. Gln151 carries the N5-methylglutamine modification.

It belongs to the universal ribosomal protein uL3 family. In terms of assembly, part of the 50S ribosomal subunit. Forms a cluster with proteins L14 and L19. Methylated by PrmB.

One of the primary rRNA binding proteins, it binds directly near the 3'-end of the 23S rRNA, where it nucleates assembly of the 50S subunit. In Rickettsia conorii (strain ATCC VR-613 / Malish 7), this protein is Large ribosomal subunit protein uL3.